Consider the following 294-residue polypeptide: Protein ATC1/LIC4 (294 aa).

A disordered region spans residues 114 to 178; sequence YTGKASLDKS…SSSLASSDAN (65 aa). A compositionally biased stretch (basic and acidic residues) spans 130–145; it reads HKPDKEQKNYKIDKPT. The span at 153–175 shows a compositional bias: low complexity; that stretch reads LKTTNEPMLSPASLSPSSSLASS.

It localises to the cytoplasm. The protein resides in the nucleus. Involved in cation homeostasis and in the regulation of the cation stress signaling cascades. Also involved in bipolar budding. This Saccharomyces cerevisiae (strain ATCC 204508 / S288c) (Baker's yeast) protein is Protein ATC1/LIC4 (ATC1).